We begin with the raw amino-acid sequence, 255 residues long: Spectinomycin 9-adenylyltransferase (255 aa).

It carries out the reaction spectinomycin + ATP = 9-O-adenylylspectinomycin + diphosphate. Functionally, mediates bacterial resistance to the antibiotic spectinomycin but not streptomycin. In Enterococcus faecalis (Streptococcus faecalis), this protein is Spectinomycin 9-adenylyltransferase.